The sequence spans 338 residues: Ketol-acid reductoisomerase (NADP(+)) (338 aa).

In terms of domain architecture, KARI N-terminal Rossmann spans methionine 1–threonine 181. Residues phenylalanine 24–glutamine 27, arginine 47, serine 52, and aspartate 82–glutamine 85 each bind NADP(+). Histidine 107 is a catalytic residue. Glycine 133 contacts NADP(+). The region spanning threonine 182–isoleucine 327 is the KARI C-terminal knotted domain. Mg(2+) is bound by residues aspartate 190, glutamate 194, glutamate 226, and glutamate 230. Residue serine 251 coordinates substrate.

It belongs to the ketol-acid reductoisomerase family. Mg(2+) is required as a cofactor.

It carries out the reaction (2R)-2,3-dihydroxy-3-methylbutanoate + NADP(+) = (2S)-2-acetolactate + NADPH + H(+). The enzyme catalyses (2R,3R)-2,3-dihydroxy-3-methylpentanoate + NADP(+) = (S)-2-ethyl-2-hydroxy-3-oxobutanoate + NADPH + H(+). It functions in the pathway amino-acid biosynthesis; L-isoleucine biosynthesis; L-isoleucine from 2-oxobutanoate: step 2/4. Its pathway is amino-acid biosynthesis; L-valine biosynthesis; L-valine from pyruvate: step 2/4. Functionally, involved in the biosynthesis of branched-chain amino acids (BCAA). Catalyzes an alkyl-migration followed by a ketol-acid reduction of (S)-2-acetolactate (S2AL) to yield (R)-2,3-dihydroxy-isovalerate. In the isomerase reaction, S2AL is rearranged via a Mg-dependent methyl migration to produce 3-hydroxy-3-methyl-2-ketobutyrate (HMKB). In the reductase reaction, this 2-ketoacid undergoes a metal-dependent reduction by NADPH to yield (R)-2,3-dihydroxy-isovalerate. The protein is Ketol-acid reductoisomerase (NADP(+)) of Sulfurimonas denitrificans (strain ATCC 33889 / DSM 1251) (Thiomicrospira denitrificans (strain ATCC 33889 / DSM 1251)).